Here is a 106-residue protein sequence, read N- to C-terminus: Met repressor (106 aa).

It belongs to the MetJ family. In terms of assembly, homodimer.

It is found in the cytoplasm. Functionally, this regulatory protein, when combined with SAM (S-adenosylmethionine) represses the expression of the methionine regulon and of enzymes involved in SAM synthesis. The protein is Met repressor of Vibrio campbellii (strain ATCC BAA-1116).